A 258-amino-acid polypeptide reads, in one-letter code: MMNPLIIKLGGVLLDSEEALERLFSALVNYRESHQRQLVIVHGGGCVVDELMKGLNLPVKKKNGLRVTPADQIDIITGALAGTANKTLLAWAKKHQIAAVGLFLGDGDSVKVTQLDEELGHVGLAQPGSPKLINSLLENGYLPVVSSIGVTNEGQLMNVNADQAATALAATLGADLILLSDVSGILDGKGQRIAEMTAAKAEQLIEQGIITDGMIVKVNAALDAARTLGRPVDIASWRHAEQLPALFNGMPMGTRILA.

Substrate contacts are provided by residues 44 to 45, Arg-66, and Asn-158; that span reads GG. ATP-binding positions include 181–186 and 209–211; these read DVSGIL and IIT.

This sequence belongs to the acetylglutamate kinase family. ArgB subfamily. As to quaternary structure, homodimer.

The protein localises to the cytoplasm. It carries out the reaction N-acetyl-L-glutamate + ATP = N-acetyl-L-glutamyl 5-phosphate + ADP. The protein operates within amino-acid biosynthesis; L-arginine biosynthesis; N(2)-acetyl-L-ornithine from L-glutamate: step 2/4. Its function is as follows. Catalyzes the ATP-dependent phosphorylation of N-acetyl-L-glutamate. This chain is Acetylglutamate kinase, found in Escherichia coli O6:K15:H31 (strain 536 / UPEC).